The following is a 193-amino-acid chain: Outer membrane lipoprotein DolP (193 aa).

An N-terminal signal peptide occupies residues 1–21 (MTLSPLKKLAILLGATIFLQG). The N-palmitoyl cysteine moiety is linked to residue C22. C22 carries the S-diacylglycerol cysteine lipid modification. 2 consecutive BON domains span residues 48 to 117 (DDET…TVSP) and 126 to 193 (KDSW…KYLD).

The protein belongs to the lipoprotein DolP family.

The protein resides in the cell outer membrane. In terms of biological role, plays an important role in maintaining outer membrane integrity. This is Outer membrane lipoprotein DolP from Haemophilus influenzae (strain ATCC 51907 / DSM 11121 / KW20 / Rd).